Consider the following 302-residue polypeptide: MQFKRVKRNIDGVLLLDKPLGISSNQALQMVKRLYQAAKAGHTGSLDPLASGLLPICLGEATKFSHFLLDADKSYRALVTLGSTTTTGDVEGEIMTQAPVTVTQSELEAILQDMVGDILQVPPMYSALKHEGKALYAYAREGVEIPRKPRPVTIHAIALERFDGKQFEMVVSCSKGTYIRTLAEDIGSRLGCGAHLGGLRRLTTAHFNLKNAVTIEQLDQMSQAERDAVLLQVDAAIEDFPIVTLDADSAFYLLQGQEVWKSGLSISGLFRLYSEQGAFLGLGEQTSRGSIAPRRLLRQAGE.

D47 (nucleophile) is an active-site residue.

The protein belongs to the pseudouridine synthase TruB family. Type 1 subfamily.

It catalyses the reaction uridine(55) in tRNA = pseudouridine(55) in tRNA. Responsible for synthesis of pseudouridine from uracil-55 in the psi GC loop of transfer RNAs. The protein is tRNA pseudouridine synthase B of Methylobacillus flagellatus (strain ATCC 51484 / DSM 6875 / VKM B-1610 / KT).